Reading from the N-terminus, the 119-residue chain is Large ribosomal subunit protein bL20 (119 aa).

It belongs to the bacterial ribosomal protein bL20 family.

In terms of biological role, binds directly to 23S ribosomal RNA and is necessary for the in vitro assembly process of the 50S ribosomal subunit. It is not involved in the protein synthesizing functions of that subunit. The polypeptide is Large ribosomal subunit protein bL20 (Syntrophus aciditrophicus (strain SB)).